A 315-amino-acid chain; its full sequence is Methionyl-tRNA formyltransferase (315 aa).

113 to 116 (SLLP) contributes to the (6S)-5,6,7,8-tetrahydrofolate binding site.

The protein belongs to the Fmt family.

It catalyses the reaction L-methionyl-tRNA(fMet) + (6R)-10-formyltetrahydrofolate = N-formyl-L-methionyl-tRNA(fMet) + (6S)-5,6,7,8-tetrahydrofolate + H(+). Its function is as follows. Attaches a formyl group to the free amino group of methionyl-tRNA(fMet). The formyl group appears to play a dual role in the initiator identity of N-formylmethionyl-tRNA by promoting its recognition by IF2 and preventing the misappropriation of this tRNA by the elongation apparatus. In Escherichia fergusonii (strain ATCC 35469 / DSM 13698 / CCUG 18766 / IAM 14443 / JCM 21226 / LMG 7866 / NBRC 102419 / NCTC 12128 / CDC 0568-73), this protein is Methionyl-tRNA formyltransferase.